A 75-amino-acid chain; its full sequence is MAAIEVGRVCVKTAGREAGENGVILDIIDKNFVEVVGVNVKNRRCNVSHLEPTENKIELKSDDIEEIKKELESLE.

The protein belongs to the eukaryotic ribosomal protein eL14 family.

The polypeptide is Large ribosomal subunit protein eL14 (Methanothermobacter thermautotrophicus (strain ATCC 29096 / DSM 1053 / JCM 10044 / NBRC 100330 / Delta H) (Methanobacterium thermoautotrophicum)).